Consider the following 443-residue polypeptide: ATP-dependent protease ATPase subunit HslU (443 aa).

ATP contacts are provided by residues I20, G62–E67, D255, E321, and R393.

Belongs to the ClpX chaperone family. HslU subfamily. As to quaternary structure, a double ring-shaped homohexamer of HslV is capped on each side by a ring-shaped HslU homohexamer. The assembly of the HslU/HslV complex is dependent on binding of ATP.

It localises to the cytoplasm. Functionally, ATPase subunit of a proteasome-like degradation complex; this subunit has chaperone activity. The binding of ATP and its subsequent hydrolysis by HslU are essential for unfolding of protein substrates subsequently hydrolyzed by HslV. HslU recognizes the N-terminal part of its protein substrates and unfolds these before they are guided to HslV for hydrolysis. The polypeptide is ATP-dependent protease ATPase subunit HslU (Helicobacter pylori (strain HPAG1)).